Consider the following 61-residue polypeptide: UPF0434 protein Sama_1339 (61 aa).

Belongs to the UPF0434 family.

The protein is UPF0434 protein Sama_1339 of Shewanella amazonensis (strain ATCC BAA-1098 / SB2B).